The chain runs to 125 residues: Transposase for transposon Tn554 (125 aa).

In terms of biological role, one of three proteins encoded by transposon Tn554 required for its transposition. The sequence is that of Transposase for transposon Tn554 (tnpC1) from Staphylococcus aureus (strain Mu50 / ATCC 700699).